The primary structure comprises 309 residues: Ribosomal RNA large subunit methyltransferase F (309 aa).

The tract at residues 1–21 (MASQHDKKSVQSGLLHPRNPH) is disordered.

It belongs to the methyltransferase superfamily. METTL16/RlmF family.

Its subcellular location is the cytoplasm. It catalyses the reaction adenosine(1618) in 23S rRNA + S-adenosyl-L-methionine = N(6)-methyladenosine(1618) in 23S rRNA + S-adenosyl-L-homocysteine + H(+). Functionally, specifically methylates the adenine in position 1618 of 23S rRNA. In Desulfotalea psychrophila (strain LSv54 / DSM 12343), this protein is Ribosomal RNA large subunit methyltransferase F.